The following is a 1265-amino-acid chain: Guanine nucleotide exchange factor SDC25 (1265 aa).

Residues 26 to 97 (QPIDVVECTY…PPSFTRSILN (72 aa)) form the SH3 domain. Disordered stretches follow at residues 409–454 (IPAS…DTIW) and 623–648 (LNLDNAKDKKNGSQNTDIQEEEDEYE). Residues 416–428 (TSCSSETSHHSPS) are compositionally biased toward low complexity. The N-terminal Ras-GEF domain occupies 782–914 (SNNRIKGGSK…LLKEVNQKFK (133 aa)). Residues 952 to 1199 (DPVLFATQLT…YQLSLIIEPK (248 aa)) form the Ras-GEF domain. A disordered region spans residues 1201-1252 (RKKVVPNSNSNNKSQEKSRDDQTDEGKTSTKKDRFSKFQLHKTKKKAPKVSK). Residues 1214–1236 (SQEKSRDDQTDEGKTSTKKDRFS) show a composition bias toward basic and acidic residues. A compositionally biased stretch (basic residues) spans 1239 to 1252 (QLHKTKKKAPKVSK).

Its function is as follows. Promotes the exchange of Ras-bound GDP by GTP. This Saccharomyces cerevisiae (strain AWRI1631) (Baker's yeast) protein is Guanine nucleotide exchange factor SDC25 (SDC25).